Here is a 172-residue protein sequence, read N- to C-terminus: Biogenesis of lysosome-related organelles complex 1 subunit 6 (172 aa).

2 disordered regions span residues 1-36 and 135-172; these read MSVP…SPDE and RALK…AKRM. Positions 63–167 form a coiled coil; sequence DLQRSKQALQ…FEREKQLTAR (105 aa). Positions 143 to 164 are enriched in basic and acidic residues; the sequence is RQKEELEREQQREKEFEREKQL.

The protein belongs to the BLOC1S6 family. In terms of assembly, interacts with BLOC1S4 and DTNBP1/BLOC1S7. Homodimer. Component of the biogenesis of lysosome-related organelles complex 1 (BLOC-1) composed of BLOC1S1, BLOC1S2, BLOC1S3, BLOC1S4, BLOC1S5, BLOC1S6, DTNBP1/BLOC1S7 and SNAPIN/BLOC1S8. Octamer composed of one copy each BLOC1S1, BLOC1S2, BLOC1S3, BLOC1S4, BLOC1S5, BLOC1S6, DTNBP1/BLOC1S7 and SNAPIN/BLOC1S8. The BLOC-1 complex associates with the AP-3 protein complex and membrane protein cargos. Interacts with BLOC1S5, F-actin, SNAP25 isoform 1 and isoform 2, SNAP47 and STX12. In terms of processing, phosphorylated. Widely expressed.

Its subcellular location is the cytoplasm. It localises to the membrane. Functionally, component of the BLOC-1 complex, a complex that is required for normal biogenesis of lysosome-related organelles (LRO), such as platelet dense granules and melanosomes. In concert with the AP-3 complex, the BLOC-1 complex is required to target membrane protein cargos into vesicles assembled at cell bodies for delivery into neurites and nerve terminals. The BLOC-1 complex, in association with SNARE proteins, is also proposed to be involved in neurite extension. May play a role in intracellular vesicle trafficking, particularly in the vesicle-docking and fusion process. This Homo sapiens (Human) protein is Biogenesis of lysosome-related organelles complex 1 subunit 6 (BLOC1S6).